A 235-amino-acid polypeptide reads, in one-letter code: H2HPP isomerase (235 aa).

2 consecutive Cupin type-2 domains span residues 41–106 and 151–216; these read VPPH…AIDI and KIPG…KSIN. Positions 50, 52, 56, 91, 162, 164, 168, and 202 each coordinate a divalent metal cation. Tyr-223 serves as a coordination point for substrate.

Monomer. Fe(2+) is required as a cofactor. Co(2+) serves as cofactor.

It localises to the cytoplasm. The catalysed reaction is 3-[(4R)-4-hydroxycyclohexa-1,5-dien-1-yl]-2-oxopropanoate = 3-[(1E,4R)-4-hydroxycyclohex-2-en-1-ylidene]pyruvate. Its pathway is antibiotic biosynthesis; bacilysin biosynthesis. Its function is as follows. Part of the bacABCDEF operon responsible for the biosynthesis of the nonribosomally synthesized dipeptide antibiotic bacilysin, composed of L-alanine and L-anticapsin. Bacilysin is an irreversible inactivator of the glutaminase domain of glucosamine synthetase. BacB catalyzes the allylic isomerization of the endocyclic-delta(4),delta(8)-7R-dihydro-hydroxyphenylpyruvate (en-H2HPP) to generate a mixture of 3E,7R- and 3Z, 7R-olefins (E/Z ration of 3/1) of the exocyclic-delta(3),delta(5)-dihydro-hydroxyphenylpyruvate (ex-H2HPP). This chain is H2HPP isomerase, found in Bacillus subtilis (strain 168).